We begin with the raw amino-acid sequence, 236 residues long: Small ribosomal subunit protein uS2c (236 aa).

This sequence belongs to the universal ribosomal protein uS2 family.

It localises to the plastid. It is found in the chloroplast. The chain is Small ribosomal subunit protein uS2c (rps2) from Barbarea verna (Land cress).